We begin with the raw amino-acid sequence, 412 residues long: Gamma-glutamyl phosphate reductase (412 aa).

The protein belongs to the gamma-glutamyl phosphate reductase family.

The protein resides in the cytoplasm. It carries out the reaction L-glutamate 5-semialdehyde + phosphate + NADP(+) = L-glutamyl 5-phosphate + NADPH + H(+). The protein operates within amino-acid biosynthesis; L-proline biosynthesis; L-glutamate 5-semialdehyde from L-glutamate: step 2/2. Catalyzes the NADPH-dependent reduction of L-glutamate 5-phosphate into L-glutamate 5-semialdehyde and phosphate. The product spontaneously undergoes cyclization to form 1-pyrroline-5-carboxylate. This chain is Gamma-glutamyl phosphate reductase, found in Actinobacillus pleuropneumoniae serotype 3 (strain JL03).